The sequence spans 271 residues: Glutamate racemase (271 aa).

Substrate-binding positions include 12–13 and 44–45; these read DS and YG. Residue C75 is the Proton donor/acceptor of the active site. 76 to 77 serves as a coordination point for substrate; sequence NT. The active-site Proton donor/acceptor is C185. Position 186–187 (186–187) interacts with substrate; that stretch reads TH.

It belongs to the aspartate/glutamate racemases family.

It catalyses the reaction L-glutamate = D-glutamate. Its pathway is cell wall biogenesis; peptidoglycan biosynthesis. Its function is as follows. Provides the (R)-glutamate required for cell wall biosynthesis. The chain is Glutamate racemase from Mycobacterium marinum (strain ATCC BAA-535 / M).